Consider the following 153-residue polypeptide: Transcriptional repressor NrdR (153 aa).

The segment at 3-34 (CPYCGYEDSKVIDTRPADEGRTIKRRRECLKC) is a zinc-finger region. The ATP-cone domain maps to 49–139 (ILVIKKDNRR…VYRQFKDINT (91 aa)).

This sequence belongs to the NrdR family. The cofactor is Zn(2+).

Its function is as follows. Negatively regulates transcription of bacterial ribonucleotide reductase nrd genes and operons by binding to NrdR-boxes. This is Transcriptional repressor NrdR from Caldicellulosiruptor saccharolyticus (strain ATCC 43494 / DSM 8903 / Tp8T 6331).